The chain runs to 222 residues: Small ribosomal subunit protein uS7m (222 aa).

The transit peptide at 1–14 (MSKKLANFAQKRWI) directs the protein to the mitochondrion.

It belongs to the universal ribosomal protein uS7 family. Component of the mitochondrial ribosome small subunit (28S) which comprises a 12S rRNA and about 30 distinct proteins.

The protein localises to the mitochondrion. The chain is Small ribosomal subunit protein uS7m (mrps-7) from Caenorhabditis briggsae.